A 238-amino-acid polypeptide reads, in one-letter code: Ribonuclease PH (238 aa).

Residues Arg-86 and 124–126 contribute to the phosphate site; that span reads GTR.

The protein belongs to the RNase PH family. As to quaternary structure, homohexameric ring arranged as a trimer of dimers.

It catalyses the reaction tRNA(n+1) + phosphate = tRNA(n) + a ribonucleoside 5'-diphosphate. In terms of biological role, phosphorolytic 3'-5' exoribonuclease that plays an important role in tRNA 3'-end maturation. Removes nucleotide residues following the 3'-CCA terminus of tRNAs; can also add nucleotides to the ends of RNA molecules by using nucleoside diphosphates as substrates, but this may not be physiologically important. Probably plays a role in initiation of 16S rRNA degradation (leading to ribosome degradation) during starvation. This is Ribonuclease PH from Mannheimia haemolytica (Pasteurella haemolytica).